The following is a 322-amino-acid chain: Gas vesicle protein L (322 aa).

The interval 1–85 (MTEQSSGSAT…SEQATVDWST (85 aa)) is disordered. Basic and acidic residues predominate over residues 17–36 (ETAKQETGRKNEQPEERTVT). The span at 45 to 57 (INTTTAESETGSE) shows a compositional bias: polar residues. Basic and acidic residues predominate over residues 58–72 (QESKAGSEQESKAGS). The segment covering 73-85 (EQESEQATVDWST) has biased composition (polar residues).

This sequence belongs to the gas vesicle GvpF/GvpL family. In terms of assembly, gvpF to GvpM interact with each other in vitro, and may form multi-subunit complex(es). Interacts with GvpC, GvpN and GvpO.

It localises to the gas vesicle. Its function is as follows. Proteins GvpF to GvpM might be involved in nucleating gas vesicle formation. A minor component of the gas vesicle. Gas vesicles are small, hollow, gas filled protein structures that are found in several microbial planktonic microorganisms. They allow positioning of halobacteria at the optimal depth for growth in the poorly aerated, shallow brine pools of their habitat. In terms of biological role, expression of a 9.5 kb mc-vac DNA fragment containing 2 divergently transcribed regions (gvpD-gvpE-gvpF-gvpG-gvpH-gvpI-gvpJ-gvpK-gvpL-gvpM and gvpA-gvpC-gvpN-gvpO) allows H.volcanii to produce gas vesicles. The chain is Gas vesicle protein L from Haloferax mediterranei (strain ATCC 33500 / DSM 1411 / JCM 8866 / NBRC 14739 / NCIMB 2177 / R-4) (Halobacterium mediterranei).